We begin with the raw amino-acid sequence, 551 residues long: Chaperonin GroEL (551 aa).

ATP is bound by residues 29 to 32, K50, 86 to 90, G417, and D499; these read TAGP and DGTTT.

This sequence belongs to the chaperonin (HSP60) family. As to quaternary structure, forms a cylinder of 14 subunits composed of two heptameric rings stacked back-to-back. Interacts with the co-chaperonin GroES.

The protein resides in the cytoplasm. The enzyme catalyses ATP + H2O + a folded polypeptide = ADP + phosphate + an unfolded polypeptide.. Together with its co-chaperonin GroES, plays an essential role in assisting protein folding. The GroEL-GroES system forms a nano-cage that allows encapsulation of the non-native substrate proteins and provides a physical environment optimized to promote and accelerate protein folding. The sequence is that of Chaperonin GroEL from Ehrlichia ruminantium (strain Gardel).